The following is a 182-amino-acid chain: Translation initiation factor IF-3 (182 aa).

Belongs to the IF-3 family. As to quaternary structure, monomer.

It is found in the cytoplasm. IF-3 binds to the 30S ribosomal subunit and shifts the equilibrium between 70S ribosomes and their 50S and 30S subunits in favor of the free subunits, thus enhancing the availability of 30S subunits on which protein synthesis initiation begins. In Thermosynechococcus vestitus (strain NIES-2133 / IAM M-273 / BP-1), this protein is Translation initiation factor IF-3.